Reading from the N-terminus, the 161-residue chain is Putative pre-16S rRNA nuclease (161 aa).

The segment at 142–161 (AGSPPGALVPRNRVDPDRHA) is disordered.

This sequence belongs to the YqgF nuclease family.

The protein localises to the cytoplasm. In terms of biological role, could be a nuclease involved in processing of the 5'-end of pre-16S rRNA. The polypeptide is Putative pre-16S rRNA nuclease (Clavibacter sepedonicus (Clavibacter michiganensis subsp. sepedonicus)).